The following is a 326-amino-acid chain: Tryptophan--tRNA ligase (326 aa).

Residues 11–13 (QPT) and 19–20 (GN) contribute to the ATP site. The 'HIGH' region motif lies at 12–20 (PTGQIHLGN). Asp-135 serves as a coordination point for L-tryptophan. ATP is bound by residues 147–149 (GED), Val-186, and 195–199 (KMSKS). Residues 195–199 (KMSKS) carry the 'KMSKS' region motif.

This sequence belongs to the class-I aminoacyl-tRNA synthetase family. Homodimer.

It is found in the cytoplasm. It carries out the reaction tRNA(Trp) + L-tryptophan + ATP = L-tryptophyl-tRNA(Trp) + AMP + diphosphate + H(+). Catalyzes the attachment of tryptophan to tRNA(Trp). This is Tryptophan--tRNA ligase from Helicobacter pylori (strain ATCC 700392 / 26695) (Campylobacter pylori).